The primary structure comprises 556 residues: Methyltransferase/ribosomally synthesized type II borosin cyclic peptide precursor pgiMA1 (556 aa).

The segment at 1-250 (MSSASSDSNT…SCSTLYVPPL (250 aa)) is methyltransferase domain. Residues Arg-74, Tyr-78, and Tyr-100 contribute to the active site. Residues Tyr-100, His-102, Val-105, Gln-174, Gly-212, Ser-243, and Thr-244 each coordinate S-adenosyl-L-methionine. Residues 251 to 377 (THANKFSGNM…GAVFGVMKLR (127 aa)) are clasp domain. Positions 378–386 (ASEVANEQG) are precursor leader. 10 positions are modified to N-methylaspartate: Asp-421, Asp-434, Asp-447, Asp-460, Asp-473, Asp-486, Asp-499, Asp-512, Asp-525, and Asp-538. Positions 543-556 (AVPVPDHVAGIPCM) are excised as a propeptide.

In the N-terminal section; belongs to the precorrin methyltransferase family. In terms of assembly, homodimer. In terms of processing, pgiMA1 automethylates at Asp-421, Asp-434, Asp-447, Asp-460, Asp-473, Asp-486, Asp-499, Asp-512, Asp-525 and Asp-538 before being processed, probably by the M64 family peptidase found in the genes surrounding PgiMA1, to release methylated peptides which then undergos macrocyclization with the N-terminus of the modified core peptides. Peptide backbone alpha-N-methylations change the physicochemical properties of amide bonds to provide structural constraints and other favorable characteristics including biological membrane permeability to peptides.

It participates in secondary metabolite biosynthesis. Fusion protein of the methyltransferase pgiM1 and 12 type II borosin core peptides; part of the gene cluster that mediates the biosynthesis of a type II borosin, a highly methylated cyclic peptide with potent biological activities. Type II borosins derive from the C-terminus of the fusion protein, and it is the same protein that methylates its own C-terminus using S-adenosyl methionine (SAM). The C-terminus is subsequently cleaved off and macrocyclized by a prolyloligopeptidase to give the final product. The chain is Methyltransferase/ribosomally synthesized type II borosin cyclic peptide precursor pgiMA1 from Phlebiopsis gigantea (strain 11061_1 CR5-6) (White-rot fungus).